A 201-amino-acid polypeptide reads, in one-letter code: RILP-like protein 2 (201 aa).

Residues 14 to 108 form the RH1 domain; that stretch reads GPEIALDKDP…LKDGPQMGVG (95 aa). Residues 67–155 are a coiled coil; sequence LEMLEALVNQ…AQDELQCYKS (89 aa). In terms of domain architecture, RH2 spans 121–197; sequence RPRFTLQELR…TVKSLFSFKQ (77 aa). The tract at residues 177 to 201 is disordered; the sequence is SPRENESKEKSTVKSLFSFKQGKQT. Residues 179–188 show a composition bias toward basic and acidic residues; it reads RENESKEKST.

This sequence belongs to the RILPL family.

The protein localises to the cytoplasm. It is found in the cytosol. It localises to the cytoskeleton. The protein resides in the microtubule organizing center. Its subcellular location is the centrosome. The protein localises to the cell projection. It is found in the cilium. Involved in cell shape and neuronal morphogenesis, positively regulating the establishment and maintenance of dendritic spines. Plays a role in cellular protein transport. The chain is RILP-like protein 2 (rilpl2) from Xenopus tropicalis (Western clawed frog).